Consider the following 101-residue polypeptide: Chaperone modulatory protein CbpM (101 aa).

Belongs to the CbpM family.

Its function is as follows. Interacts with CbpA and inhibits both the DnaJ-like co-chaperone activity and the DNA binding activity of CbpA. Together with CbpA, modulates the activity of the DnaK chaperone system. Does not inhibit the co-chaperone activity of DnaJ. In Salmonella arizonae (strain ATCC BAA-731 / CDC346-86 / RSK2980), this protein is Chaperone modulatory protein CbpM.